The following is a 93-amino-acid chain: Acylphosphatase (93 aa).

An Acylphosphatase-like domain is found at 5–91 (RAHFLVKGFV…RGETTFRIRS (87 aa)). Active-site residues include Arg-20 and Asn-38.

It belongs to the acylphosphatase family.

The enzyme catalyses an acyl phosphate + H2O = a carboxylate + phosphate + H(+). This chain is Acylphosphatase (acyP), found in Moorella thermoacetica (strain ATCC 39073 / JCM 9320).